The following is a 707-amino-acid chain: Early transcription factor 82 kDa subunit (707 aa).

It belongs to the poxviridae VETF large subunit family. Heterodimer of a 70 kDa and a 82 kDa subunit. Part of the early transcription complex composed of ETF, RAP94, and the DNA-directed RNA polymerase.

It is found in the virion. Functionally, acts with RNA polymerase to initiate transcription from early gene promoters. Is recruited by the RPO-associated protein of 94 kDa (RAP94) to form the early transcription complex, which also contains the core RNA polymerase. ETF heterodimer binds to early gene promoters. The protein is Early transcription factor 82 kDa subunit (VETFL) of Molluscum contagiosum virus subtype 1 (MOCV).